The following is a 199-amino-acid chain: Cytochrome c oxidase subunit 2 (199 aa).

The helical transmembrane segment at 1–13 (AICSLVLYLLSLM) threads the bilayer. At 14-26 (LMEKLSSNTVDAQ) the chain is on the mitochondrial matrix side. A helical membrane pass occupies residues 27–54 (EVELIWTILPAIVLILLALPSLQILYMM). Topologically, residues 55–199 (DEIDEPDLTL…SSLLSSSSSL (145 aa)) are mitochondrial intermembrane. 6 residues coordinate Cu cation: His128, Cys163, Glu165, Cys167, His171, and Met174. A Mg(2+)-binding site is contributed by Glu165.

The protein belongs to the cytochrome c oxidase subunit 2 family. In terms of assembly, component of the cytochrome c oxidase (complex IV, CIV), a multisubunit enzyme composed of 14 subunits. The complex is composed of a catalytic core of 3 subunits MT-CO1, MT-CO2 and MT-CO3, encoded in the mitochondrial DNA, and 11 supernumerary subunits COX4I, COX5A, COX5B, COX6A, COX6B, COX6C, COX7A, COX7B, COX7C, COX8 and NDUFA4, which are encoded in the nuclear genome. The complex exists as a monomer or a dimer and forms supercomplexes (SCs) in the inner mitochondrial membrane with NADH-ubiquinone oxidoreductase (complex I, CI) and ubiquinol-cytochrome c oxidoreductase (cytochrome b-c1 complex, complex III, CIII), resulting in different assemblies (supercomplex SCI(1)III(2)IV(1) and megacomplex MCI(2)III(2)IV(2)). Found in a complex with TMEM177, COA6, COX18, COX20, SCO1 and SCO2. Interacts with TMEM177 in a COX20-dependent manner. Interacts with COX20. Interacts with COX16. Requires Cu cation as cofactor.

The protein localises to the mitochondrion inner membrane. The enzyme catalyses 4 Fe(II)-[cytochrome c] + O2 + 8 H(+)(in) = 4 Fe(III)-[cytochrome c] + 2 H2O + 4 H(+)(out). Component of the cytochrome c oxidase, the last enzyme in the mitochondrial electron transport chain which drives oxidative phosphorylation. The respiratory chain contains 3 multisubunit complexes succinate dehydrogenase (complex II, CII), ubiquinol-cytochrome c oxidoreductase (cytochrome b-c1 complex, complex III, CIII) and cytochrome c oxidase (complex IV, CIV), that cooperate to transfer electrons derived from NADH and succinate to molecular oxygen, creating an electrochemical gradient over the inner membrane that drives transmembrane transport and the ATP synthase. Cytochrome c oxidase is the component of the respiratory chain that catalyzes the reduction of oxygen to water. Electrons originating from reduced cytochrome c in the intermembrane space (IMS) are transferred via the dinuclear copper A center (CU(A)) of subunit 2 and heme A of subunit 1 to the active site in subunit 1, a binuclear center (BNC) formed by heme A3 and copper B (CU(B)). The BNC reduces molecular oxygen to 2 water molecules using 4 electrons from cytochrome c in the IMS and 4 protons from the mitochondrial matrix. The protein is Cytochrome c oxidase subunit 2 (MT-CO2) of Rhea americana (Greater rhea).